Here is a 177-residue protein sequence, read N- to C-terminus: Large ribosomal subunit protein uL10 (177 aa).

The protein belongs to the universal ribosomal protein uL10 family. In terms of assembly, part of the ribosomal stalk of the 50S ribosomal subunit. The N-terminus interacts with L11 and the large rRNA to form the base of the stalk. The C-terminus forms an elongated spine to which L12 dimers bind in a sequential fashion forming a multimeric L10(L12)X complex.

Functionally, forms part of the ribosomal stalk, playing a central role in the interaction of the ribosome with GTP-bound translation factors. The sequence is that of Large ribosomal subunit protein uL10 from Mycobacterium leprae (strain Br4923).